Here is a 306-residue protein sequence, read N- to C-terminus: Homeobox protein Hox-C13a (306 aa).

The segment at residues 236 to 295 (GRKKRVPYTKIQLKELEKEYAASKFITKDKRRRISATTNLSERQVTIWFQNRRVKEKKFV) is a DNA-binding region (homeobox).

It belongs to the Abd-B homeobox family.

It is found in the nucleus. In terms of biological role, sequence-specific transcription factor which is part of a developmental regulatory system that provides cells with specific positional identities on the anterior-posterior axis. The protein is Homeobox protein Hox-C13a (hoxc13a) of Danio rerio (Zebrafish).